We begin with the raw amino-acid sequence, 270 residues long: Surfeit locus protein 4 homolog (270 aa).

The next 6 helical transmembrane spans lie at 65–85 (FLATVFVLVNLLGQLGGCGMV), 93–113 (IAVGLLFFIVVLQTVAYSILW), 115–135 (FQFLLRNFALIGALLLVLAEA), 178–198 (LSVWQVIQDIIGSILMVLVVL), 206–226 (ALILVALLTILNLYHNAWWTI), and 243–263 (TLSVIGGLLMIVSLGPGGVSM). The Di-lysine motif signature appears at 267–270 (KKKW).

This sequence belongs to the SURF4 family.

The protein localises to the endoplasmic reticulum membrane. Functionally, endoplasmic reticulum cargo receptor that mediates the export of lipoproteins by recruiting cargos into COPII vesicles to facilitate their secretion. The polypeptide is Surfeit locus protein 4 homolog (Drosophila melanogaster (Fruit fly)).